The chain runs to 187 residues: Adenine phosphoribosyltransferase (187 aa).

The protein belongs to the purine/pyrimidine phosphoribosyltransferase family. In terms of assembly, homodimer.

The protein localises to the cytoplasm. It catalyses the reaction AMP + diphosphate = 5-phospho-alpha-D-ribose 1-diphosphate + adenine. The protein operates within purine metabolism; AMP biosynthesis via salvage pathway; AMP from adenine: step 1/1. Its function is as follows. Catalyzes a salvage reaction resulting in the formation of AMP, that is energically less costly than de novo synthesis. The sequence is that of Adenine phosphoribosyltransferase from Burkholderia pseudomallei (strain 668).